We begin with the raw amino-acid sequence, 557 residues long: BZIP-type transcription factor MBZ1 (557 aa).

The span at 171-194 shows a compositional bias: low complexity; that stretch reads AKAQAQQRQQQQQQQLIQQTQRQT. 2 disordered regions span residues 171–209 and 221–273; these read AKAQAQQRQQQQQQQLIQQTQRQTSPKSRGKAPQPTDPI and MRAK…RQLR. Positions 229 to 240 are enriched in polar residues; the sequence is EPESQSVLNNLP. The span at 254 to 271 shows a compositional bias: basic and acidic residues; that stretch reads RLLASEEGKKLSSKERRQ. In terms of domain architecture, bZIP spans 264–327; the sequence is LSSKERRQLR…KRLSDLTRML (64 aa). Positions 267-286 are basic motif; that stretch reads KERRQLRNKVSARAFRSRRK. The leucine-zipper stretch occupies residues 289-296; it reads ISQLEAEI. The disordered stretch occupies residues 344–364; that stretch reads PTGLPQGSPVKIEQNPQQEQN.

The protein resides in the nucleus. In terms of biological role, BZIP-type transcription factor that functions as either an activator or a suppressor, and which contributes to the regulation of fungal growth, conidiation, cell wall integrity, and virulence. Plays a key role in virulence against insects by mediating cell wall integrity, cell surface hydrophobicity, and adherence to hydrophobic surfaces. Exhibits negative regulation of subtilisin proteases, but positive control of an adhesin gene. The polypeptide is BZIP-type transcription factor MBZ1 (Metarhizium robertsii (strain ARSEF 23 / ATCC MYA-3075) (Metarhizium anisopliae (strain ARSEF 23))).